Here is a 348-residue protein sequence, read N- to C-terminus: Fructose-1,6-bisphosphatase class 1 (348 aa).

Mg(2+)-binding residues include glutamate 92, aspartate 111, leucine 113, and aspartate 114. Substrate-binding positions include 114–117 (DGSS) and asparagine 204. Position 276 (glutamate 276) interacts with Mg(2+).

Belongs to the FBPase class 1 family. As to quaternary structure, homotetramer. Mg(2+) serves as cofactor.

Its subcellular location is the cytoplasm. The enzyme catalyses beta-D-fructose 1,6-bisphosphate + H2O = beta-D-fructose 6-phosphate + phosphate. It functions in the pathway carbohydrate biosynthesis; gluconeogenesis. This is Fructose-1,6-bisphosphatase class 1 from Methylorubrum extorquens (strain CM4 / NCIMB 13688) (Methylobacterium extorquens).